Consider the following 81-residue polypeptide: Defensin-like protein 115 (81 aa).

Positions 1 to 24 (MAITKKMLVVFLLAFLFVTSSVHC) are cleaved as a signal peptide. Disulfide bonds link C40-C78, C46-C69, C54-C76, and C58-C77.

Belongs to the DEFL family.

It is found in the secreted. This Arabidopsis thaliana (Mouse-ear cress) protein is Defensin-like protein 115.